Reading from the N-terminus, the 497-residue chain is L-asparagine permease (497 aa).

A run of 12 helical transmembrane segments spans residues 34–54 (QVQMIAIGGAIGTGLFLGAGA), 58–78 (MAGPALALVYLICGIFSFFIL), 109–129 (VAGWMYFINWAMTGIVDITAV), 146–166 (VFALGALTIVGTMNMIGVKWF), 171–191 (FWFALIKVLAIVIFLVVGTIF), 219–239 (LLPALVLIQGVVFAFASIELV), 264–284 (IGLFYVGSVVLLVLLLPWNAY), 298–318 (LGVPYIGSIMNIVVLTAALSS), 353–373 (YAGILATLVVYVVGVFLNYLV), 378–398 (FEIVLNFASLGIIASWAFIMV), 422–442 (APFTSWLTLLFLLSVLVLMAF), and 448–468 (TYTIASLPLIAILLVAGWFGV).

The protein belongs to the amino acid-polyamine-organocation (APC) superfamily. Amino acid transporter (AAT) (TC 2.A.3.1) family.

It is found in the cell inner membrane. This Salmonella typhimurium (strain LT2 / SGSC1412 / ATCC 700720) protein is L-asparagine permease (ansP).